Here is a 323-residue protein sequence, read N- to C-terminus: tRNA U34 carboxymethyltransferase (323 aa).

Residues K91, W105, K110, G130, 181–182 (IE), M196, Y200, and R315 each bind carboxy-S-adenosyl-L-methionine.

It belongs to the class I-like SAM-binding methyltransferase superfamily. CmoB family. Homotetramer.

The enzyme catalyses carboxy-S-adenosyl-L-methionine + 5-hydroxyuridine(34) in tRNA = 5-carboxymethoxyuridine(34) in tRNA + S-adenosyl-L-homocysteine + H(+). Functionally, catalyzes carboxymethyl transfer from carboxy-S-adenosyl-L-methionine (Cx-SAM) to 5-hydroxyuridine (ho5U) to form 5-carboxymethoxyuridine (cmo5U) at position 34 in tRNAs. The polypeptide is tRNA U34 carboxymethyltransferase (Yersinia pseudotuberculosis serotype IB (strain PB1/+)).